We begin with the raw amino-acid sequence, 243 residues long: Venom protease (243 aa).

In terms of domain architecture, Peptidase S1 spans V1 to K243. A disulfide bridge links C34 with C50. Active-site charge relay system residues include H49 and D97. Intrachain disulfides connect C165–C178 and C189–C217. S193 acts as the Charge relay system in catalysis.

The protein belongs to the peptidase S1 family. In terms of tissue distribution, expressed by the venom duct.

It localises to the secreted. In Bombus pensylvanicus (American bumblebee), this protein is Venom protease.